We begin with the raw amino-acid sequence, 312 residues long: D-apiose import binding protein (312 aa).

An N-terminal signal peptide occupies residues 1-26 (MKASKRWVALAAATLTLFTATGTAQA). D-apiofuranose contacts are provided by residues N39, 115–116 (DR), 162–164 (DIN), R168, N218, D243, and Q263.

The protein belongs to the bacterial solute-binding protein 2 family.

The protein localises to the periplasm. Part of an ABC transporter complex involved in D-apiose import. Binds D-apiose, D-ribose and D-ribulose. This is D-apiose import binding protein from Paraburkholderia graminis (strain ATCC 700544 / DSM 17151 / LMG 18924 / NCIMB 13744 / C4D1M).